Reading from the N-terminus, the 425-residue chain is RNA-binding protein L (425 aa).

Residues 1–20 (MQQPPSQPQPGMGGPPPPPQ) are compositionally biased toward pro residues. A disordered region spans residues 1 to 82 (MQQPPSQPQP…AAPPPQAMPA (82 aa)). The span at 21–31 (GAAGQPPQWGA) shows a compositional bias: low complexity. The span at 32-80 (IPPPMPPHQYGAPPPQQPPAMWGQPPPQAHYGQVPPPQPYYAAPPPQAM) shows a compositional bias: pro residues. RRM domains lie at 90 to 170 (KTLW…WASA), 180 to 259 (YTIF…PAAN), and 284 to 356 (TTIF…WGRS).

Belongs to the polyadenylate-binding RBP45 family. In terms of assembly, interacts with RBP-P. Interacts with RAB5A.

The protein resides in the nucleus. The protein localises to the cytoplasm. Its function is as follows. RNA-binding protein that binds to a cis-localization element or zipcode, within the 5'-CDS of prolamine RNA. Binds strongly to glutelin and prolamin mRNAs, particularly to 3'-UTR and zipcode RNA. Recognizes and binds to glutelin zipcode RNA, which is required for proper mRNA localization to cisternal endoplasmic reticulum. Recognizes and binds to prolamin zipcode RNA, which is required for proper mRNA localization to the protein body endoplasmic reticulum that delimits the prolamine intracisternal inclusion granules. Required for the correct localization of glutelin and prolamine mRNA in endosperm cells during grain development. RBP-L and RBP-P form a quaternary complex with the membrane trafficking factors NSF and RAB5A. This quaternay complex carries glutelin mRNAs for active transport on endosomes to the cortical endoplasmic reticulum membrane, and enables endosome-mediated glutelin mRNA transport in endosperm cells. In Oryza sativa subsp. japonica (Rice), this protein is RNA-binding protein L.